Here is a 144-residue protein sequence, read N- to C-terminus: Large ribosomal subunit protein uL13 (144 aa).

This sequence belongs to the universal ribosomal protein uL13 family. As to quaternary structure, part of the 50S ribosomal subunit.

This protein is one of the early assembly proteins of the 50S ribosomal subunit, although it is not seen to bind rRNA by itself. It is important during the early stages of 50S assembly. The chain is Large ribosomal subunit protein uL13 from Syntrophomonas wolfei subsp. wolfei (strain DSM 2245B / Goettingen).